Here is a 95-residue protein sequence, read N- to C-terminus: Large ribosomal subunit protein bL25 (95 aa).

It belongs to the bacterial ribosomal protein bL25 family. In terms of assembly, part of the 50S ribosomal subunit; part of the 5S rRNA/L5/L18/L25 subcomplex. Contacts the 5S rRNA. Binds to the 5S rRNA independently of L5 and L18.

This is one of the proteins that binds to the 5S RNA in the ribosome where it forms part of the central protuberance. The protein is Large ribosomal subunit protein bL25 of Shewanella pealeana (strain ATCC 700345 / ANG-SQ1).